Consider the following 235-residue polypeptide: Ribitol-5-phosphate cytidylyltransferase (235 aa).

CTP is bound by residues 7–10 (LAGG), 82–88 (GADRNTS), and Ser-113.

Belongs to the IspD/TarI cytidylyltransferase family. TarI subfamily.

The enzyme catalyses D-ribitol 5-phosphate + CTP + H(+) = CDP-L-ribitol + diphosphate. Its pathway is cell wall biogenesis; poly(ribitol phosphate) teichoic acid biosynthesis. Its function is as follows. Catalyzes the transfer of the cytidylyl group of CTP to D-ribitol 5-phosphate. This is Ribitol-5-phosphate cytidylyltransferase from Streptococcus pneumoniae (strain Hungary19A-6).